We begin with the raw amino-acid sequence, 682 residues long: Potassium-transporting ATPase ATP-binding subunit (682 aa).

A run of 4 helical transmembrane segments spans residues 34–54 (PVMF…LAMV), 58–78 (IAGS…TVLF), 219–239 (IALT…TATL), and 254–274 (VLVA…LSAI). The active-site 4-aspartylphosphate intermediate is the Asp-307. ATP is bound by residues Asp-344, Glu-348, 377 to 384 (FTAQSRMS), and Lys-395. Asp-518 and Asp-522 together coordinate Mg(2+). Transmembrane regions (helical) follow at residues 588–608 (FAII…LNVM), 616–636 (AILS…PLAL), and 662–682 (LVVP…LGLA).

It belongs to the cation transport ATPase (P-type) (TC 3.A.3) family. Type IA subfamily. As to quaternary structure, the system is composed of three essential subunits: KdpA, KdpB and KdpC.

It localises to the cell inner membrane. It carries out the reaction K(+)(out) + ATP + H2O = K(+)(in) + ADP + phosphate + H(+). In terms of biological role, part of the high-affinity ATP-driven potassium transport (or Kdp) system, which catalyzes the hydrolysis of ATP coupled with the electrogenic transport of potassium into the cytoplasm. This subunit is responsible for energy coupling to the transport system and for the release of the potassium ions to the cytoplasm. This chain is Potassium-transporting ATPase ATP-binding subunit, found in Salmonella typhimurium (strain LT2 / SGSC1412 / ATCC 700720).